We begin with the raw amino-acid sequence, 261 residues long: Kynurenine formamidase (261 aa).

At serine 9 the chain carries Phosphoserine. The short motif at 36 to 40 (HGGAW) is the HGGXW element. The active-site Nucleophile is serine 110. Residues aspartate 211 and histidine 243 contribute to the active site.

It belongs to the kynurenine formamidase family. In terms of assembly, homodimer.

The enzyme catalyses N-formyl-L-kynurenine + H2O = L-kynurenine + formate + H(+). The protein operates within amino-acid degradation; L-tryptophan degradation via kynurenine pathway; L-kynurenine from L-tryptophan: step 2/2. Functionally, catalyzes the hydrolysis of N-formyl-L-kynurenine to L-kynurenine, the second step in the kynurenine pathway of tryptophan degradation. Kynurenine may be further oxidized to nicotinic acid, NAD(H) and NADP(H). Required for elimination of toxic metabolites. The polypeptide is Kynurenine formamidase (Saccharomyces cerevisiae (strain ATCC 204508 / S288c) (Baker's yeast)).